The following is a 341-amino-acid chain: Large ribosomal subunit protein uL3 (341 aa).

Disordered stretches follow at residues 1–31 (MGHR…SPRS) and 234–261 (HRKG…GQMG).

The protein belongs to the universal ribosomal protein uL3 family. As to quaternary structure, part of the 50S ribosomal subunit. Forms a cluster with proteins L14 and L24e.

One of the primary rRNA binding proteins, it binds directly near the 3'-end of the 23S rRNA, where it nucleates assembly of the 50S subunit. In Metallosphaera sedula (strain ATCC 51363 / DSM 5348 / JCM 9185 / NBRC 15509 / TH2), this protein is Large ribosomal subunit protein uL3.